A 296-amino-acid polypeptide reads, in one-letter code: Probable AP endonuclease (296 aa).

An intrachain disulfide couples C16 to C20. 8 residues coordinate Zn(2+): H78, H115, E142, H182, H218, D231, H233, and E271.

Belongs to the AP endonuclease 2 family. Zn(2+) serves as cofactor.

Its subcellular location is the host nucleus. The protein localises to the host cytoplasm. It localises to the virion. In terms of biological role, endonuclease that plays a role in DNA repair. Cleaves phosphodiester bonds on the 5' side of apurinic or apyrimidinic sites (AP sites). In addition to endonuclease activity, the ASFV enzyme has a proofreading 3'-5' exonuclease activity that is considerably more efficient in the elimination of a mismatch than in that of a correctly paired base. Displays 3'-phosphatase and 3'-repair diesterase activities. The single nucleotide gaps generated by the AP endonuclease are filled by the viral AP endonuclease and DNA ligase. In Ornithodoros (relapsing fever ticks), this protein is Probable AP endonuclease.